The sequence spans 198 residues: MYYPEPISKLIDSFMKLPGIGPKTAVRLAFFVLNMKEDVVLDFAKALVNAKRNLTYCSSCGHITDKDPCYICEDDKRDRSIICVVQDPKDVIAMEKMKEYNGLYHVLHGAISPMEGIGPEDIKIAELLRRLQDETVQEVILATNPNIEGEATAMYISRLLKPTGVKITRIAHGLPVGGDLEYADEVTLSKALEGRREL.

The segment at 57–72 (CSSCGHITDKDPCYIC) adopts a C4-type zinc-finger fold. One can recognise a Toprim domain in the interval 80–175 (SIICVVQDPK…KITRIAHGLP (96 aa)).

Belongs to the RecR family.

May play a role in DNA repair. It seems to be involved in an RecBC-independent recombinational process of DNA repair. It may act with RecF and RecO. The protein is Recombination protein RecR of Anoxybacillus flavithermus (strain DSM 21510 / WK1).